Here is a 532-residue protein sequence, read N- to C-terminus: CTP synthase (532 aa).

Residues 1 to 269 are amidoligase domain; sequence MNQASTRFIF…DTQILNHFNI (269 aa). Ser-17 is a binding site for CTP. Ser-17 provides a ligand contact to UTP. ATP-binding positions include 18–23 and Asp-75; that span reads SLGKGL. Asp-75 and Glu-143 together coordinate Mg(2+). Residues 150-152, 190-195, and Lys-226 each bind CTP; these read DIE and KTKPTQ. UTP is bound by residues 190–195 and Lys-226; that span reads KTKPTQ. One can recognise a Glutamine amidotransferase type-1 domain in the interval 294-532; the sequence is NVAIIGKYIK…FISFIKASLD (239 aa). Residue Gly-355 participates in L-glutamine binding. Residue Cys-382 is the Nucleophile; for glutamine hydrolysis of the active site. L-glutamine contacts are provided by residues 383 to 386, Glu-406, and Arg-462; that span reads MGMQ. Residues His-509 and Glu-511 contribute to the active site.

It belongs to the CTP synthase family. As to quaternary structure, homotetramer.

It carries out the reaction UTP + L-glutamine + ATP + H2O = CTP + L-glutamate + ADP + phosphate + 2 H(+). The enzyme catalyses L-glutamine + H2O = L-glutamate + NH4(+). It catalyses the reaction UTP + NH4(+) + ATP = CTP + ADP + phosphate + 2 H(+). Its pathway is pyrimidine metabolism; CTP biosynthesis via de novo pathway; CTP from UDP: step 2/2. With respect to regulation, allosterically activated by GTP, when glutamine is the substrate; GTP has no effect on the reaction when ammonia is the substrate. The allosteric effector GTP functions by stabilizing the protein conformation that binds the tetrahedral intermediate(s) formed during glutamine hydrolysis. Inhibited by the product CTP, via allosteric rather than competitive inhibition. In terms of biological role, catalyzes the ATP-dependent amination of UTP to CTP with either L-glutamine or ammonia as the source of nitrogen. Regulates intracellular CTP levels through interactions with the four ribonucleotide triphosphates. In Ehrlichia chaffeensis (strain ATCC CRL-10679 / Arkansas), this protein is CTP synthase.